The following is a 71-amino-acid chain: Translation initiation factor IF-1 (71 aa).

The S1-like domain maps to 1-71 (MAKQSAIEQD…LSKARITYRY (71 aa)).

It belongs to the IF-1 family. As to quaternary structure, component of the 30S ribosomal translation pre-initiation complex which assembles on the 30S ribosome in the order IF-2 and IF-3, IF-1 and N-formylmethionyl-tRNA(fMet); mRNA recruitment can occur at any time during PIC assembly.

The protein resides in the cytoplasm. One of the essential components for the initiation of protein synthesis. Stabilizes the binding of IF-2 and IF-3 on the 30S subunit to which N-formylmethionyl-tRNA(fMet) subsequently binds. Helps modulate mRNA selection, yielding the 30S pre-initiation complex (PIC). Upon addition of the 50S ribosomal subunit IF-1, IF-2 and IF-3 are released leaving the mature 70S translation initiation complex. This chain is Translation initiation factor IF-1, found in Flavobacterium psychrophilum (strain ATCC 49511 / DSM 21280 / CIP 103535 / JIP02/86).